A 610-amino-acid polypeptide reads, in one-letter code: Anthocyanin regulatory Lc protein (610 aa).

Disordered regions lie at residues 402 to 422 (ATGA…MSER) and 468 to 524 (LESS…PVLT). The region spanning 412 to 461 (TGTKNHVMSERKRREKLNEMFLVLKSLLPSIHRVNKASILAETIAYLKEL) is the bHLH domain. Residues 481-495 (TTTRLITRPSRGNNE) are compositionally biased toward polar residues. Residues 508–519 (KSPELGRDDVER) show a composition bias toward basic and acidic residues.

It belongs to the bHLH protein family. In terms of assembly, efficient DNA binding requires dimerization with another bHLH protein.

The protein localises to the nucleus. Putative transcriptional activator. Controls tissue-specific synthesis of anthocyanin pigments in various parts of the maize plant. In Zea mays (Maize), this protein is Anthocyanin regulatory Lc protein (LC).